The primary structure comprises 208 residues: Coiled-coil domain-containing protein 25 (208 aa).

At 1–105 the chain is on the extracellular side; it reads MVFYFTSSSV…SNLKKTADMD (105 aa). Residues 21–25 form a DNA-binding region; that stretch reads KDKYE. K23 is subject to N6-acetyllysine. A helical transmembrane segment spans residues 106 to 122; sequence VGQIGFHRQKDVKIVTV. Residues 117-187 adopt a coiled-coil conformation; that stretch reads VKIVTVEKKV…REMDELRSYS (71 aa). At 123 to 208 the chain is on the cytoplasmic side; it reads EKKVNEILNR…QDGNDSDEFM (86 aa). The span at 145-184 shows a compositional bias: basic and acidic residues; it reads EAEKECRDHEERNEKKAQIQEMKRREKEEMKKKREMDELR. The tract at residues 145 to 208 is disordered; that stretch reads EAEKECRDHE…QDGNDSDEFM (64 aa). S204 is subject to Phosphoserine.

Belongs to the CCDC25 family. As to quaternary structure, interacts (via cytoplasmic region) with ILK.

The protein resides in the cell membrane. It localises to the endomembrane system. Transmembrane receptor that senses neutrophil extracellular traps (NETs) and triggers the ILK-PARVB pathway to enhance cell motility. NETs are mainly composed of DNA fibers and are released by neutrophils to bind pathogens during inflammation. Formation of NETs is also associated with cancer metastasis, NET-DNA acting as a chemotactic factor to attract cancer cells. Specifically binds NETs on its extracellular region, in particular the 8-OHdG-enriched DNA present in NETs, and recruits ILK, initiating the ILK-PARVB cascade to induce cytoskeleton rearrangement and directional migration of cells. This chain is Coiled-coil domain-containing protein 25, found in Bos taurus (Bovine).